A 239-amino-acid chain; its full sequence is tRNA (guanine-N(7)-)-methyltransferase (239 aa).

Residues Glu69, Glu94, Asp121, and Asp144 each coordinate S-adenosyl-L-methionine. Residue Asp144 is part of the active site. Substrate is bound at residue Lys148. Residues Arg150–Arg155 form an interaction with RNA region. Substrate-binding positions include Asp180 and Thr217 to Glu220.

This sequence belongs to the class I-like SAM-binding methyltransferase superfamily. TrmB family. As to quaternary structure, monomer.

It catalyses the reaction guanosine(46) in tRNA + S-adenosyl-L-methionine = N(7)-methylguanosine(46) in tRNA + S-adenosyl-L-homocysteine. It participates in tRNA modification; N(7)-methylguanine-tRNA biosynthesis. Functionally, catalyzes the formation of N(7)-methylguanine at position 46 (m7G46) in tRNA. The chain is tRNA (guanine-N(7)-)-methyltransferase from Shigella boydii serotype 4 (strain Sb227).